Here is a 281-residue protein sequence, read N- to C-terminus: Small ribosomal subunit biogenesis GTPase RsgA (281 aa).

The region spanning 59-212 (QNEFIRPKVA…LIDTPGFSSL (154 aa)) is the CP-type G domain. GTP is bound by residues 108 to 111 (TKAD) and 155 to 163 (GQSGVGKTT). Positions 235, 240, 242, and 250 each coordinate Zn(2+).

It belongs to the TRAFAC class YlqF/YawG GTPase family. RsgA subfamily. In terms of assembly, monomer. Associates with 30S ribosomal subunit, binds 16S rRNA. It depends on Zn(2+) as a cofactor.

The protein resides in the cytoplasm. One of several proteins that assist in the late maturation steps of the functional core of the 30S ribosomal subunit. Helps release RbfA from mature subunits. May play a role in the assembly of ribosomal proteins into the subunit. Circularly permuted GTPase that catalyzes slow GTP hydrolysis, GTPase activity is stimulated by the 30S ribosomal subunit. This Mycoplasmopsis agalactiae (strain NCTC 10123 / CIP 59.7 / PG2) (Mycoplasma agalactiae) protein is Small ribosomal subunit biogenesis GTPase RsgA.